Here is a 380-residue protein sequence, read N- to C-terminus: Cytochrome b (380 aa).

The next 4 helical transmembrane spans lie at 34–54, 78–99, 114–134, and 179–199; these read FGSL…LLAM, WLIR…YLHI, WNTG…GYVL, and FFAL…VHLT. Residues His84 and His98 each contribute to the heme b site. Heme b-binding residues include His183 and His197. His202 lines the a ubiquinone pocket. 4 consecutive transmembrane segments (helical) span residues 227-247, 289-309, 321-341, and 348-368; these read LKDI…ALFS, LGGV…PFLH, LSQL…WVGS, and FIII…ILFP.

The protein belongs to the cytochrome b family. As to quaternary structure, the cytochrome bc1 complex contains 11 subunits: 3 respiratory subunits (MT-CYB, CYC1 and UQCRFS1), 2 core proteins (UQCRC1 and UQCRC2) and 6 low-molecular weight proteins (UQCRH/QCR6, UQCRB/QCR7, UQCRQ/QCR8, UQCR10/QCR9, UQCR11/QCR10 and a cleavage product of UQCRFS1). This cytochrome bc1 complex then forms a dimer. Heme b is required as a cofactor.

It is found in the mitochondrion inner membrane. Component of the ubiquinol-cytochrome c reductase complex (complex III or cytochrome b-c1 complex) that is part of the mitochondrial respiratory chain. The b-c1 complex mediates electron transfer from ubiquinol to cytochrome c. Contributes to the generation of a proton gradient across the mitochondrial membrane that is then used for ATP synthesis. This Procellaria parkinsoni (Black petrel) protein is Cytochrome b (MT-CYB).